The primary structure comprises 163 residues: Phosphopantetheine adenylyltransferase (163 aa).

S8 provides a ligand contact to substrate. Residues 8–9 (SF) and H16 each bind ATP. The substrate site is built by K40, T72, and R86. Residues 87-89 (GLR), E97, and 122-128 (HSFLSSS) contribute to the ATP site.

This sequence belongs to the bacterial CoaD family. In terms of assembly, homohexamer. Requires Mg(2+) as cofactor.

The protein localises to the cytoplasm. It carries out the reaction (R)-4'-phosphopantetheine + ATP + H(+) = 3'-dephospho-CoA + diphosphate. It participates in cofactor biosynthesis; coenzyme A biosynthesis; CoA from (R)-pantothenate: step 4/5. Functionally, reversibly transfers an adenylyl group from ATP to 4'-phosphopantetheine, yielding dephospho-CoA (dPCoA) and pyrophosphate. This chain is Phosphopantetheine adenylyltransferase, found in Synechococcus sp. (strain CC9902).